The sequence spans 76 residues: Probable insulin-like peptide alpha-type 1 (76 aa).

The N-terminal stretch at 1 to 24 (MKTYSFFVLFIVFIFFISSSKSHS) is a signal peptide. Disulfide bonds link C32/C60, C44/C73, and C48/C74.

Belongs to the insulin family.

Its subcellular location is the secreted. The chain is Probable insulin-like peptide alpha-type 1 (ins-21) from Caenorhabditis elegans.